The chain runs to 170 residues: Large ribosomal subunit protein uL11 (170 aa).

Belongs to the universal ribosomal protein uL11 family. Part of the ribosomal stalk of the 50S ribosomal subunit. Interacts with L10 and the large rRNA to form the base of the stalk. L10 forms an elongated spine to which L12 dimers bind in a sequential fashion forming a multimeric L10(L12)X complex.

In terms of biological role, forms part of the ribosomal stalk which helps the ribosome interact with GTP-bound translation factors. The chain is Large ribosomal subunit protein uL11 from Saccharolobus islandicus (strain M.16.27) (Sulfolobus islandicus).